The chain runs to 171 residues: MADPTRARKLADRIKVIVADALEKRVKDPRLGFVTITDARVTNDLQHATLFYTVFGSDEEKQGTALALESAKGVLRSEVGKRTGIRLTPTLTFTLDEVPETATQIQDLLKQAAEQDARVAALAAAAQPAGDPDPYKKPVDHTDDWDEDDEDDRDGDDAVDALDAAADVPRL.

Low complexity predominate over residues Ala120–Pro132. A disordered region spans residues Ala120–Leu171. Basic and acidic residues predominate over residues Asp133–Thr142. The span at Asp143–Asp160 shows a compositional bias: acidic residues. Over residues Ala161–Leu171 the composition is skewed to low complexity.

It belongs to the RbfA family. As to quaternary structure, monomer. Binds 30S ribosomal subunits, but not 50S ribosomal subunits or 70S ribosomes.

It localises to the cytoplasm. Functionally, one of several proteins that assist in the late maturation steps of the functional core of the 30S ribosomal subunit. Associates with free 30S ribosomal subunits (but not with 30S subunits that are part of 70S ribosomes or polysomes). Required for efficient processing of 16S rRNA. May interact with the 5'-terminal helix region of 16S rRNA. In Kineococcus radiotolerans (strain ATCC BAA-149 / DSM 14245 / SRS30216), this protein is Ribosome-binding factor A.